The sequence spans 456 residues: Adenylosuccinate lyase (456 aa).

Residues 15–16 (RY), 90–92 (NHD), and 122–123 (TS) contribute to the N(6)-(1,2-dicarboxyethyl)-AMP site. The Proton donor/acceptor role is filled by His171. A N(6)-(1,2-dicarboxyethyl)-AMP-binding site is contributed by Gln247. The active-site Proton donor/acceptor is the Ser295. N(6)-(1,2-dicarboxyethyl)-AMP contacts are provided by residues Ser296, 301–303 (KVN), Asn309, Arg335, and 340–344 (STVLR).

It belongs to the lyase 1 family. Adenylosuccinate lyase subfamily. Homotetramer. Residues from neighboring subunits contribute catalytic and substrate-binding residues to each active site.

The catalysed reaction is N(6)-(1,2-dicarboxyethyl)-AMP = fumarate + AMP. It catalyses the reaction (2S)-2-[5-amino-1-(5-phospho-beta-D-ribosyl)imidazole-4-carboxamido]succinate = 5-amino-1-(5-phospho-beta-D-ribosyl)imidazole-4-carboxamide + fumarate. It functions in the pathway purine metabolism; AMP biosynthesis via de novo pathway; AMP from IMP: step 2/2. The protein operates within purine metabolism; IMP biosynthesis via de novo pathway; 5-amino-1-(5-phospho-D-ribosyl)imidazole-4-carboxamide from 5-amino-1-(5-phospho-D-ribosyl)imidazole-4-carboxylate: step 2/2. Functionally, catalyzes two reactions in de novo purine nucleotide biosynthesis. Catalyzes the breakdown of 5-aminoimidazole- (N-succinylocarboxamide) ribotide (SAICAR or 2-[5-amino-1-(5-phospho-beta-D-ribosyl)imidazole-4-carboxamido]succinate) to 5-aminoimidazole-4-carboxamide ribotide (AICAR or 5-amino-1-(5-phospho-beta-D-ribosyl)imidazole-4-carboxamide) and fumarate, and of adenylosuccinate (ADS or N(6)-(1,2-dicarboxyethyl)-AMP) to adenosine monophosphate (AMP) and fumarate. The chain is Adenylosuccinate lyase (purB) from Haemophilus influenzae (strain ATCC 51907 / DSM 11121 / KW20 / Rd).